The chain runs to 126 residues: Aspartate 1-decarboxylase (126 aa).

S25 serves as the catalytic Schiff-base intermediate with substrate; via pyruvic acid. At S25 the chain carries Pyruvic acid (Ser). Substrate is bound at residue T57. The active-site Proton donor is the Y58. Residue 73 to 75 (GGA) coordinates substrate.

This sequence belongs to the PanD family. Heterooctamer of four alpha and four beta subunits. Requires pyruvate as cofactor. In terms of processing, is synthesized initially as an inactive proenzyme, which is activated by self-cleavage at a specific serine bond to produce a beta-subunit with a hydroxyl group at its C-terminus and an alpha-subunit with a pyruvoyl group at its N-terminus.

The protein resides in the cytoplasm. The catalysed reaction is L-aspartate + H(+) = beta-alanine + CO2. Its pathway is cofactor biosynthesis; (R)-pantothenate biosynthesis; beta-alanine from L-aspartate: step 1/1. Functionally, catalyzes the pyruvoyl-dependent decarboxylation of aspartate to produce beta-alanine. This is Aspartate 1-decarboxylase from Xanthomonas campestris pv. campestris (strain B100).